The chain runs to 401 residues: Argininosuccinate synthase (401 aa).

Residues 8–16 and A35 contribute to the ATP site; that span reads AYSGGLDTS. L-citrulline-binding residues include Y86 and S91. An ATP-binding site is contributed by G116. 3 residues coordinate L-aspartate: T118, N122, and D123. N122 serves as a coordination point for L-citrulline. L-citrulline is bound by residues R126, S175, S184, E260, and Y272.

Belongs to the argininosuccinate synthase family. Type 1 subfamily. As to quaternary structure, homotetramer.

Its subcellular location is the cytoplasm. The enzyme catalyses L-citrulline + L-aspartate + ATP = 2-(N(omega)-L-arginino)succinate + AMP + diphosphate + H(+). The protein operates within amino-acid biosynthesis; L-arginine biosynthesis; L-arginine from L-ornithine and carbamoyl phosphate: step 2/3. The chain is Argininosuccinate synthase from Carboxydothermus hydrogenoformans (strain ATCC BAA-161 / DSM 6008 / Z-2901).